A 128-amino-acid chain; its full sequence is Small ribosomal subunit protein uS12 (128 aa).

The segment at 1–25 (MPTIQQLIRRGRKTKASKTASPALE) is disordered. 3-methylthioaspartic acid is present on aspartate 89. Residues 101–128 (SLDTSGVADRRNSRSKYGAKRPKEAAAK) form a disordered region.

Belongs to the universal ribosomal protein uS12 family. As to quaternary structure, part of the 30S ribosomal subunit. Contacts proteins S8 and S17. May interact with IF1 in the 30S initiation complex.

In terms of biological role, with S4 and S5 plays an important role in translational accuracy. Functionally, interacts with and stabilizes bases of the 16S rRNA that are involved in tRNA selection in the A site and with the mRNA backbone. Located at the interface of the 30S and 50S subunits, it traverses the body of the 30S subunit contacting proteins on the other side and probably holding the rRNA structure together. The combined cluster of proteins S8, S12 and S17 appears to hold together the shoulder and platform of the 30S subunit. The sequence is that of Small ribosomal subunit protein uS12 from Chlorobium phaeobacteroides (strain BS1).